We begin with the raw amino-acid sequence, 152 residues long: Nucleoside diphosphate kinase (152 aa).

Positions 10, 58, 86, 92, 103, and 113 each coordinate ATP. H116 (pros-phosphohistidine intermediate) is an active-site residue.

The protein belongs to the NDK family. It depends on Mg(2+) as a cofactor.

Its subcellular location is the cytoplasm. It carries out the reaction a 2'-deoxyribonucleoside 5'-diphosphate + ATP = a 2'-deoxyribonucleoside 5'-triphosphate + ADP. The enzyme catalyses a ribonucleoside 5'-diphosphate + ATP = a ribonucleoside 5'-triphosphate + ADP. In terms of biological role, major role in the synthesis of nucleoside triphosphates other than ATP. The ATP gamma phosphate is transferred to the NDP beta phosphate via a ping-pong mechanism, using a phosphorylated active-site intermediate. In Methanosphaera stadtmanae (strain ATCC 43021 / DSM 3091 / JCM 11832 / MCB-3), this protein is Nucleoside diphosphate kinase.